A 233-amino-acid polypeptide reads, in one-letter code: Pirin-like protein YhaK (233 aa).

Belongs to the pirin family. As to quaternary structure, monomer.

It is found in the cytoplasm. Its function is as follows. Does not have quercetin 2,3-dioxygenase activity. The sequence is that of Pirin-like protein YhaK (yhaK) from Escherichia coli O157:H7.